The following is a 249-amino-acid chain: MELKIDTHSHTYASGHAYSTLIENARSAKENGLAMFCTTDHAESMPGAPHYWFFANQRVLPRFLEGVAILRGVEANILNTEGEIDLPLSVDPNLDWAIASFHEPVFAPSNKEAHTQALLNVIQGGRIDALGHLGNPHFDFDFHAVLHCAKEHNVAIEINNSTLKGHSRVGSVERCYEIARVGKALGVYFTTGSDAHFCQDVGKLDLASELLDSVGIDSHRVITHSPSQFLDFLELRGRGPIDELASLRQ.

Zn(2+) is bound by residues H8, H10, H16, H41, E74, H102, H132, D194, and H196.

This sequence belongs to the PHP family. Zn(2+) serves as cofactor.

The chain is Probable phosphatase VVA0289 from Vibrio vulnificus (strain YJ016).